The following is a 198-amino-acid chain: MEHYISLLVKSIFIENMALSFFLGMCTFLAVSKKVKTSFGLGVAVVVVLTIAVPVNNLVYNLVLRENALVEGVDLSFLNFITFIGVIAALVQILEMVLDRFFPPLYNALGIFLPLITVNCAIFGGVSFMVQRDYNFAESIVYGFGSGVGWMLAIVALAGIREKMKYSDVPPGLRGLGITFITVGLMALGFMSFSGVQL.

Helical transmembrane passes span 11-31, 39-59, 77-97, 110-130, 140-160, and 176-196; these read SIFI…FLAV, FGLG…NNLV, FLNF…LEMV, GIFL…SFMV, IVYG…LAGI, and LGIT…FSGV.

The protein belongs to the NqrDE/RnfAE family. Composed of six subunits; NqrA, NqrB, NqrC, NqrD, NqrE and NqrF. Post-translationally, the N-terminus is blocked.

The protein localises to the cell inner membrane. It carries out the reaction a ubiquinone + n Na(+)(in) + NADH + H(+) = a ubiquinol + n Na(+)(out) + NAD(+). Its activity is regulated as follows. This reaction is tightly coupled to the Na(+) pumping activity and specifically requires Na(+) for activity. Inhibited by korormicin and 2-N-heptyl-4-hydroxyquinoline N-oxide (HQNO). NQR complex catalyzes the reduction of ubiquinone-1 to ubiquinol by two successive reactions, coupled with the transport of Na(+) ions from the cytoplasm to the periplasm. NqrA to NqrE are probably involved in the second step, the conversion of ubisemiquinone to ubiquinol. This Vibrio alginolyticus protein is Na(+)-translocating NADH-quinone reductase subunit E.